Reading from the N-terminus, the 511-residue chain is ATP synthase subunit alpha (511 aa).

An ATP-binding site is contributed by 169 to 176 (GDRKTGKT).

This sequence belongs to the ATPase alpha/beta chains family. In terms of assembly, F-type ATPases have 2 components, CF(1) - the catalytic core - and CF(0) - the membrane proton channel. CF(1) has five subunits: alpha(3), beta(3), gamma(1), delta(1), epsilon(1). CF(0) has three main subunits: a(1), b(2) and c(9-12). The alpha and beta chains form an alternating ring which encloses part of the gamma chain. CF(1) is attached to CF(0) by a central stalk formed by the gamma and epsilon chains, while a peripheral stalk is formed by the delta and b chains.

It is found in the cell membrane. It carries out the reaction ATP + H2O + 4 H(+)(in) = ADP + phosphate + 5 H(+)(out). In terms of biological role, produces ATP from ADP in the presence of a proton gradient across the membrane. The alpha chain is a regulatory subunit. This Latilactobacillus sakei subsp. sakei (strain 23K) (Lactobacillus sakei subsp. sakei) protein is ATP synthase subunit alpha.